Reading from the N-terminus, the 1132-residue chain is Phosphatidylinositide phosphatase SAC2 (1132 aa).

The SAC domain occupies 167 to 518 (LKMFMDSESF…GDSISRQYAG (352 aa)). Residues 250–269 (ESSDDDKSSPETPPQDSTCV) are disordered. The hSac2 domain maps to 593 to 760 (RSHQELISQL…KSSKPHEDII (168 aa)). Phosphoserine is present on residues S714, S827, and S830. Residues 833 to 872 (TMENPGVMGNKVQGESDGDISSDNDSYHSDEFLTNSKSEE) are disordered. Basic and acidic residues predominate over residues 857 to 872 (DSYHSDEFLTNSKSEE). A phosphoserine mark is found at S879, S882, S908, and S911. 2 stretches are compositionally biased toward polar residues: residues 908-918 (SASSIDVSTHA) and 994-1005 (RVSNEETQSEPM). 2 disordered regions span residues 908–951 (SASS…HTRT) and 981–1016 (VAQK…SQLN). Residue S1103 is modified to Phosphoserine.

As to quaternary structure, homodimer. Interacts with OCRL and RAB5. Interacts with INPP5B and INPP4A. Interacts with STAT3; the interaction is independent of STAT3 'Tyr-705' phosphorylation status. Highly expressed in brain and hypothalamus, expressed in lung and pancreas, and detected at low levels in liver and heart (at protein level).

It is found in the membrane. Its subcellular location is the clathrin-coated pit. The protein resides in the early endosome. The protein localises to the recycling endosome. The enzyme catalyses a myo-inositol phosphate + H2O = myo-inositol + phosphate. Functionally, inositol 4-phosphatase which mainly acts on phosphatidylinositol 4-phosphate. May be functionally linked to OCRL, which converts phosphatidylinositol 4,5-bisphosphate to phosphatidylinositol, for a sequential dephosphorylation of phosphatidylinositol 4,5-bisphosphate at the 5 and 4 position of inositol, thus playing an important role in the endocytic recycling. Regulator of TF:TFRC and integrins recycling pathway, is also involved in cell migration mechanisms. Modulates AKT/GSK3B pathway by decreasing AKT and GSK3B phosphorylation. Negatively regulates STAT3 signaling pathway through inhibition of STAT3 phosphorylation and translocation to the nucleus. Functionally important modulator of cardiac myocyte size and of the cardiac response to stress. May play a role as negative regulator of axon regeneration after central nervous system injuries. This chain is Phosphatidylinositide phosphatase SAC2, found in Mus musculus (Mouse).